The sequence spans 914 residues: MAGKARVHELAKELGVTSKEVLARLNEQGEFVKSASSTVEAPVARRLRESFGGGKAAEGAAKAPAKAAAKGDAKTAAKGDVKAPDKALDAALDNAIKAGGNGEAAAPPAQPGGTATTPAAQATPEAPARPGPAAARPSAPAPGQPKPPAPGQPPRPGATPGPRPGPAPKPAARTPRVGNNPFSSAQPVDRPIPRPVPRPGAPRPGAPRPGASPGNMPPRPGGVGGPGRPARPGAPRPGGGRPGGPGGRDGGGGNYRGGGVGAPPGGGGGFRGRPGGGGGGRPGQRGGAAGAFGRPGGAPRRGRKSKRQKRQEYDSMQAPVVGGVRLPHGNGETIRLARGASLSDFAEKIDANPASLVQALFNLGEMVTATQSVGDETLELLGSEMNYNVQVVSPEDEDRELLESFDLTYGEDEGTEEDLQTRPPVVTVMGHVDHGKTRLLDTIRKANVREAEQVTVEHDGVERPITFIDTPGHEAFTAMRARGAKATDIAILVVAADDGVMPQTVEAINHAQAADVPIVVAVNKIDVEGADPQKIRGQLTEYGLVPEEFGGDTMFVDISAKQGTNIDQLLEAVLLTADAALDLRANPDMEAQGVAIEAHLDRGRGPVATVLIQRGTLRVGDSIVAGDAYGRVRRMVDEHGDDVEEALPSRPVQVIGFTSVPGAGDNLLVVDEDRIARQIADKRSARKRNALAARSRKRISLEDLDSALKETSQLNLILKGDNAGTVEALEEALMGIQIDDEVALRVIDRGVGGITETNVNLASASDAVIIGFNVRAEGKATELANREGVEIRYYSVIYQAIDEIEKALRGMLKPIYEENQLGRAEIRAIFRSSKVGIIAGCMITSGVVRRNAKARLLRDNVVVSENLTINSLRREKDDVTEVREGFECGMTLGYSDIKEGDVIESYELVQKERT.

Disordered regions lie at residues 52-84 and 98-326; these read GGGKAAEGAAKAPAKAAAKGDAKTAAKGDVKAP and AGGN…GVRL. Residues 57 to 68 show a composition bias toward low complexity; the sequence is AEGAAKAPAKAA. Residues 69–84 are compositionally biased toward basic and acidic residues; that stretch reads AKGDAKTAAKGDVKAP. Residues 98–138 show a composition bias toward low complexity; it reads AGGNGEAAAPPAQPGGTATTPAAQATPEAPARPGPAAARPS. Pro residues-rich tracts occupy residues 139-169 and 193-207; these read APAPGQPKPPAPGQPPRPGATPGPRPGPAPK and PRPVPRPGAPRPGAP. A compositionally biased stretch (gly residues) spans 236-296; that stretch reads RPGGGRPGGP…GAAGAFGRPG (61 aa). Basic residues predominate over residues 300-309; that stretch reads RRGRKSKRQK. Residues 421–581 form the tr-type G domain; sequence TRPPVVTVMG…AVLLTADAAL (161 aa). Residues 430 to 437, 469 to 473, and 523 to 526 each bind GTP; these read GHVDHGKT, DTPGH, and NKID.

The protein belongs to the TRAFAC class translation factor GTPase superfamily. Classic translation factor GTPase family. IF-2 subfamily.

The protein resides in the cytoplasm. Its function is as follows. One of the essential components for the initiation of protein synthesis. Protects formylmethionyl-tRNA from spontaneous hydrolysis and promotes its binding to the 30S ribosomal subunits. Also involved in the hydrolysis of GTP during the formation of the 70S ribosomal complex. This is Translation initiation factor IF-2 from Mycobacterium avium (strain 104).